Reading from the N-terminus, the 204-residue chain is MPQARWHGPQRRIGVTGGIASGKSSVGLYLSEQHALPLLDADIYARDALVAGSAATMAVLQRYGNAVAEAGQLNPISIDRIALASIIFSDAQERRWLEQLIHPIVAKRFDVALADLSAEPVVVLMIPLLFEAKLSGLCSDVWLVDCSPAQQCQRLIARDGLTLKQAEQRISTQWPLEQKRPLADLVIDNSGAPRAWRDQISSIC.

In terms of domain architecture, DPCK spans 12 to 204; it reads RIGVTGGIAS…AWRDQISSIC (193 aa). An ATP-binding site is contributed by 20 to 25; the sequence is ASGKSS.

This sequence belongs to the CoaE family.

It localises to the cytoplasm. The enzyme catalyses 3'-dephospho-CoA + ATP = ADP + CoA + H(+). It functions in the pathway cofactor biosynthesis; coenzyme A biosynthesis; CoA from (R)-pantothenate: step 5/5. Its function is as follows. Catalyzes the phosphorylation of the 3'-hydroxyl group of dephosphocoenzyme A to form coenzyme A. In Prochlorococcus marinus (strain MIT 9313), this protein is Dephospho-CoA kinase.